The chain runs to 192 residues: Secreted and transmembrane protein 1A (192 aa).

A signal peptide spans 1-27 (MMTCPSVPAIPTLWLFSILLLVVSLNA). Topologically, residues 28–165 (QNKSWDNPIC…SSPIEGKPGT (138 aa)) are extracellular. N-linked (GlcNAc...) asparagine glycosylation is found at Asn-29, Asn-55, Asn-84, and Asn-127. Residues 166–186 (LVGVITVIFILGVAGFITFIY) form a helical membrane-spanning segment. Over 187–192 (YRHRRS) the chain is Cytoplasmic.

It belongs to the SECTM family.

It is found in the cell membrane. The protein localises to the secreted. The chain is Secreted and transmembrane protein 1A from Mus musculus (Mouse).